The following is a 193-amino-acid chain: Transforming protein RhoA (193 aa).

GTP-binding positions include 12 to 19, 30 to 37, 59 to 63, and 117 to 120; these read GDGACGKT, FPEVYVPT, DTAGQ, and NKKD. The Effector region motif lies at 34-42; that stretch reads YVPTVFENY. The segment at 61–78 is switch II region; involved in RAP1GDS1 isoform 3 binding; the sequence is AGQEDYDRLRPLSYPDTD. Gln-63 is modified (5-glutamyl serotonin). Lys-135 participates in a covalent cross-link: Glycyl lysine isopeptide (Lys-Gly) (interchain with G-Cter in ubiquitin). Residue 160-162 participates in GTP binding; sequence SAK. Ser-188 is modified (phosphoserine; by PKG/PRKG1). Residue Cys-190 is modified to Cysteine methyl ester. A lipid anchor (S-geranylgeranyl cysteine) is attached at Cys-190. The propeptide at 191–193 is removed in mature form; sequence LIL.

Belongs to the small GTPase superfamily. Rho family. In terms of assembly, interacts with ARHGEF28. Interacts (via GTP-bound form) with RIPOR1 (via N-terminus); this interaction links RHOA to STK24 and STK26 kinases. Interacts with RIPOR2 (via active GTP- or inactive GDP-bound forms) isoform 1 and isoform 2; these interactions are direct, block the loading of GTP to RHOA and decrease upon chemokine CCL19 stimulation in primary T lymphocytes. Binds PRKCL1, ROCK1 and ROCK2. Interacts with ARHGEF2, ARHGEF3, NET1 and RTKN. Interacts with PLCE1 and AKAP13. Interacts with DIAPH1. Interacts (in the constitutively activated, GTP-bound form) with DGKQ. Interacts with RACK1; enhances RHOA activation. Interacts with PKP4; the interaction is detected at the midbody. Interacts (GTP-bound form preferentially) with PKN2; the interaction stimulates autophosphorylation and phosphorylation of PKN2. Interacts with ARHGDIA; this interaction inactivates and stabilizes RHOA. Interacts with ARHGDIB. Interacts (GTP-bound form) with KCNA2 (via cytoplasmic N-terminal domain). Interacts (GTP-bound form) with ECT2; the interaction results in allosteric activation of ECT2. Interacts with RAP1GDS1; the interaction is direct and in a 1:1 stoichiometry. Post-translationally, ubiquitinated by the BCR(KCTD13) and BCR(TNFAIP1) E3 ubiquitin ligase complexes, leading to its degradation by the proteasome, thereby regulating the actin cytoskeleton and synaptic transmission in neurons. Ubiquitinated at Lys-135 in a FBXL19-mediated manner; leading to proteasomal degradation. Phosphorylation by PRKG1 at Ser-188 inactivates RHOA signaling. Phosphorylation by SLK at Ser-188 in response to AGTR2 activation. In terms of processing, serotonylation of Gln-63 by TGM2 during activation and aggregation of platelets leads to constitutive activation of GTPase activity.

The protein resides in the cell membrane. The protein localises to the cytoplasm. It localises to the cytoskeleton. Its subcellular location is the cleavage furrow. It is found in the cell cortex. The protein resides in the midbody. The protein localises to the cell projection. It localises to the lamellipodium. Its subcellular location is the dendrite. It is found in the nucleus. The enzyme catalyses GTP + H2O = GDP + phosphate + H(+). Regulated by guanine nucleotide exchange factors (GEFs) which promote the exchange of bound GDP for free GTP, GTPase activating proteins (GAPs) which increase the GTP hydrolysis activity and GDP dissociation inhibitors which inhibit the dissociation of the nucleotide from the GTPase. Activated by GEFs such as ARHGEF2, ARHGEF3, ARHGEF28 and BCR. Inhibited by GAPs such as ARHGAP30. Inhibited by GDP dissociation inhibitors such as ARHGDIA. Its function is as follows. Small GTPase which cycles between an active GTP-bound and an inactive GDP-bound state. Mainly associated with cytoskeleton organization, in active state binds to a variety of effector proteins to regulate cellular responses such as cytoskeletal dynamics, cell migration and cell cycle. Regulates a signal transduction pathway linking plasma membrane receptors to the assembly of focal adhesions and actin stress fibers. Involved in a microtubule-dependent signal that is required for the myosin contractile ring formation during cell cycle cytokinesis. Plays an essential role in cleavage furrow formation. Required for the apical junction formation of keratinocyte cell-cell adhesion. Essential for the SPATA13-mediated regulation of cell migration and adhesion assembly and disassembly. The MEMO1-RHOA-DIAPH1 signaling pathway plays an important role in ERBB2-dependent stabilization of microtubules at the cell cortex. It controls the localization of APC and CLASP2 to the cell membrane, via the regulation of GSK3B activity. In turn, membrane-bound APC allows the localization of the MACF1 to the cell membrane, which is required for microtubule capture and stabilization. Regulates KCNA2 potassium channel activity by reducing its location at the cell surface in response to CHRM1 activation; promotes KCNA2 endocytosis. Acts as an allosteric activator of guanine nucleotide exchange factor ECT2 by binding in its activated GTP-bound form to the PH domain of ECT2 which stimulates the release of PH inhibition and promotes the binding of substrate RHOA to the ECT2 catalytic center. May be an activator of PLCE1. In neurons, involved in the inhibition of the initial spine growth. Upon activation by CaMKII, modulates dendritic spine structural plasticity by relaying CaMKII transient activation to synapse-specific, long-term signaling. Acts as a regulator of platelet alpha-granule release during activation and aggregation of platelets. When activated by DAAM1 may signal centrosome maturation and chromosomal segregation during cell division. May also be involved in contractile ring formation during cytokinesis. In Mus musculus (Mouse), this protein is Transforming protein RhoA (Rhoa).